Consider the following 641-residue polypeptide: MTDGHLFNNILLGGRAGSNPGQFKVYSGGLAWKRQGGGKTIEIEKSDLTSVTWMKVPRAYQLGVRTKDGLFYKFIGFREQDVSSLTNFMQKNMGLSPDEKQLSVSGQNWGGIDINGNMLTFMVGSKQAFEVSLADVSQTQMQGKTDVLLEFHVDDTTGGNEKDSLMDLSFHVPTSNTQFLGDENRTAAQVLWETIMGVADVDSSEEAVVTFEGIAILTPRGRYSVELHLSFLRLQGQANDFKIQYSSIVRLFLLPKSNNPHTFVVVTLDPPIRKGQTLYPHIVIQFETEAVVERNLALTKEVLAEKYKDRLEESYKGLIHEVFTKVLRGLSGAKVTRPGSFRSCQDGYAVKSSLKAEDGLLYPLEKGFFFLPKPPTLILHEEIEFVEFERHGAGGASISSHYFDLLVKLKNDQEHLFRNIQRSEYHNLFNFINGKHLKIMNLGDGQGATGGVTAVLRDTDDDAVDPHLERIKNQAGDEESDEEDEDFVADKDDSGSPTDDSGGEDSDASESGGEKEKLSKKEASSSKPPVKRKPKGRDEEGSDKRKPKKKKDPNAPKRAMTPFMYFSMAERGNMKNNNPDLPTTEIAKKLGEMWQKMTGEEKQPYIQQSQVDKKRYEKESAVYRGAAAMDVDSGSGGNESD.

A disordered region spans residues 459 to 561 (TDDDAVDPHL…DPNAPKRAMT (103 aa)). Over residues 476–487 (GDEESDEEDEDF) the composition is skewed to acidic residues. The span at 512–524 (GGEKEKLSKKEAS) shows a compositional bias: basic and acidic residues. The segment at residues 556–624 (PKRAMTPFMY…RYEKESAVYR (69 aa)) is a DNA-binding region (HMG box).

The protein belongs to the SSRP1 family. In terms of assembly, component of the FACT complex, a stable heterodimer of SPT16 and SSRP1.

It is found in the nucleus. It localises to the chromosome. Its function is as follows. Component of the FACT complex, a general chromatin factor that acts to reorganize nucleosomes. The FACT complex is involved in multiple processes that require DNA as a template such as mRNA elongation, DNA replication and DNA repair. During transcription elongation the FACT complex acts as a histone chaperone that both destabilizes and restores nucleosomal structure. It facilitates the passage of RNA polymerase II and transcription by promoting the dissociation of one histone H2A-H2B dimer from the nucleosome, then subsequently promotes the reestablishment of the nucleosome following the passage of RNA polymerase II. Binds specifically to double-stranded DNA. The polypeptide is FACT complex subunit SSRP1-A (SSRP1-A) (Oryza sativa subsp. japonica (Rice)).